The chain runs to 202 residues: Ribonuclease HII (202 aa).

Residues 12-201 (LLIAGVDEAG…VRQLKLFIPE (190 aa)) form the RNase H type-2 domain. A divalent metal cation contacts are provided by aspartate 18, glutamate 19, and aspartate 110.

This sequence belongs to the RNase HII family. Requires Mn(2+) as cofactor. It depends on Mg(2+) as a cofactor.

The protein resides in the cytoplasm. It catalyses the reaction Endonucleolytic cleavage to 5'-phosphomonoester.. Functionally, endonuclease that specifically degrades the RNA of RNA-DNA hybrids. The protein is Ribonuclease HII of Coxiella burnetii (strain CbuK_Q154) (Coxiella burnetii (strain Q154)).